The following is a 104-amino-acid chain: L-rhamnose mutarotase (104 aa).

Y18 contacts substrate. H22 functions as the Proton donor in the catalytic mechanism. Residues Y41 and 76 to 77 contribute to the substrate site; that span reads WW.

Belongs to the rhamnose mutarotase family. In terms of assembly, homodimer.

It localises to the cytoplasm. It catalyses the reaction alpha-L-rhamnose = beta-L-rhamnose. It participates in carbohydrate metabolism; L-rhamnose metabolism. In terms of biological role, involved in the anomeric conversion of L-rhamnose. The chain is L-rhamnose mutarotase from Escherichia coli O127:H6 (strain E2348/69 / EPEC).